The primary structure comprises 138 residues: Small ribosomal subunit protein uS11c (138 aa).

Residues 1 to 23 form a disordered region; the sequence is MAKPILRIGSRKNTRSGSRKNVR. Over residues 9–23 the composition is skewed to basic residues; sequence GSRKNTRSGSRKNVR.

The protein belongs to the universal ribosomal protein uS11 family. As to quaternary structure, part of the 30S ribosomal subunit.

Its subcellular location is the plastid. The protein resides in the chloroplast. This is Small ribosomal subunit protein uS11c from Barbarea verna (Land cress).